The primary structure comprises 57 residues: Small ribosomal subunit protein bS21B (57 aa).

The interval 37 to 57 is disordered; the sequence is RYEKPSARRKRKAEAARKRRR. Residues 43-57 show a composition bias toward basic residues; sequence ARRKRKAEAARKRRR.

It belongs to the bacterial ribosomal protein bS21 family.

This is Small ribosomal subunit protein bS21B from Gloeobacter violaceus (strain ATCC 29082 / PCC 7421).